A 634-amino-acid chain; its full sequence is MSDALSTPQVALPAQRPTPFLTLSLGSIGVVYGDIGTSPLYALKESLNAATAGNALTEAMVLGVMSLMLWTLVIIVTLKYVLLIMRADNHGEGGTLTLMALLQHVMHRRFAAISLLGMAGAALFYGDAIITPAISVLSAVEGLKLVAPVFDPYILPLSMAILIGLFVVQFRGTAAVAAWFGPIMLLWFTVMALGGIMNLITDLSVLRAINPLYGVDFLMHHGRAGLLALGAVFLTVTGAEALYADMGHFSRRPIQFAWFAVVFPALALCYLGQGAMLMSHPERLENPFFFLFPEWALLPMVGLATAATIIASQAVISGAYSLTQQAIQLGLLPRMEIRRTSETEKGQIYIPRANWLLLIAVLYLVFAFKSSSALASAYGIAVTGTMVITSVMAYFVMRKCWKWSVATSALIIAPFLTVDLIFLMANMLKIFEGGWIPLVIGGGLMGVMITWRRGTKIVAKKTVRDEVDLGDFIKSISVSSSISRVRGVAVFLTGNPNSTPTSLMHNLKHNKVLHEKNVILRVVTEDVPRVPEAERSSVEVVNDLFSRIELRFGYMESPNVPKALAACADRGFSFDIMSTSFFLSRRVIRPAVPSEMPRWQSLLFANMAKWADDASLYFRIPTGRAVEVGMQINV.

Transmembrane regions (helical) follow at residues 20–40 (FLTL…TSPL), 64–84 (VMSL…VLLI), 110–130 (FAAI…DAII), 148–168 (PVFD…LFVV), 176–196 (VAAW…LGGI), 224–244 (AGLL…ALYA), 256–276 (FAWF…QGAM), 290–310 (FLFP…ATII), 348–368 (IYIP…VFAF), 377–397 (AYGI…YFVM), 405–425 (VATS…FLMA), and 430–450 (IFEG…VMIT).

It belongs to the HAK/KUP transporter (TC 2.A.72) family.

Its subcellular location is the cell inner membrane. The enzyme catalyses K(+)(in) + H(+)(in) = K(+)(out) + H(+)(out). In terms of biological role, transport of potassium into the cell. Likely operates as a K(+):H(+) symporter. The protein is Probable potassium transport system protein Kup 1 of Rhodopseudomonas palustris (strain BisB5).